A 166-amino-acid chain; its full sequence is MAKDHYFDISAKLDMMEMKNAIEQAKKEVSTRFDFKGIMVEIDLNEKAKVLNLSSSSDSKIDALKDIVMSKMIKRGLSTKSLDEVKTEGISGGNVKVVYRIVDSIEKDEAKKIVKAIKDAKLKVTPSIQGDEIRVTGKKIDDLQAVIALVKQMEDLKAPLTFGNFK.

It belongs to the YajQ family.

Nucleotide-binding protein. The polypeptide is Nucleotide-binding protein SUN_0226 (Sulfurovum sp. (strain NBC37-1)).